A 524-amino-acid polypeptide reads, in one-letter code: Inosine-5'-monophosphate dehydrogenase 4 (524 aa).

CBS domains follow at residues 122–183 and 185–241; these read FINS…VVSE and MTKN…PLAS. Ser125 is modified (phosphoserine). NAD(+) contacts are provided by residues 279 to 281 and 329 to 331; these read DSS and GMG. The K(+) site is built by Gly331 and Gly333. An IMP-binding site is contributed by Ser334. Residue Cys336 participates in K(+) binding. The Thioimidate intermediate role is filled by Cys336. Residues 369 to 371, 392 to 393, and 416 to 420 contribute to the IMP site; these read DGG, GG, and YRGMG. Arg438 serves as the catalytic Proton acceptor. Position 450 (Gln450) interacts with IMP. K(+)-binding residues include Glu509, Gly510, and Gly511.

The protein belongs to the IMPDH/GMPR family. Homotetramer. Seems to be able to form heterotetramers composed from more than 1 of the 3 IMPDH gene products (IMD2-4). It depends on K(+) as a cofactor.

It localises to the cytoplasm. It catalyses the reaction IMP + NAD(+) + H2O = XMP + NADH + H(+). It functions in the pathway purine metabolism; XMP biosynthesis via de novo pathway; XMP from IMP: step 1/1. With respect to regulation, mycophenolic acid (MPA) is a non-competitive inhibitor that prevents formation of the closed enzyme conformation by binding to the same site as the amobile flap. In contrast, mizoribine monophosphate (MZP) is a competitive inhibitor that induces the closed conformation. MPA is a potent inhibitor of mammalian IMPDHs but a poor inhibitor of the bacterial enzymes. MZP is a more potent inhibitor of bacterial IMPDH. Functionally, catalyzes the conversion of inosine 5'-phosphate (IMP) to xanthosine 5'-phosphate (XMP), the first committed and rate-limiting step in the de novo synthesis of guanine nucleotides, and therefore plays an important role in the regulation of cell growth. The sequence is that of Inosine-5'-monophosphate dehydrogenase 4 from Saccharomyces cerevisiae (strain ATCC 204508 / S288c) (Baker's yeast).